The primary structure comprises 593 residues: Glucose-6-phosphate 1-dehydrogenase, chloroplastic (593 aa).

Residues 116–123 (GASGDLAK) and R150 contribute to the NADP(+) site. Residues C168 and C176 are joined by a disulfide bond. K253 lines the NADP(+) pocket. D-glucose 6-phosphate is bound by residues K253, 283–287 (HYLGK), E321, and D340. The Proton acceptor role is filled by H345. K438 is an NADP(+) binding site. D-glucose 6-phosphate contacts are provided by K441 and R446. Residues R451 and R480 each contribute to the NADP(+) site. Q482 is a binding site for D-glucose 6-phosphate. NADP(+)-binding positions include 488-490 (YLK) and R573.

It belongs to the glucose-6-phosphate dehydrogenase family. Homodimer.

The protein localises to the plastid. It localises to the chloroplast. It carries out the reaction D-glucose 6-phosphate + NADP(+) = 6-phospho-D-glucono-1,5-lactone + NADPH + H(+). It participates in carbohydrate degradation; pentose phosphate pathway; D-ribulose 5-phosphate from D-glucose 6-phosphate (oxidative stage): step 1/3. With respect to regulation, regulated by metabolites. Post-translationally inactivated by cysteine-mediated redox modification via the ferredoxin-thioredoxin system in the light and this avoids futile cycles with photosynthetic CO2 fixation. Functionally, catalyzes the rate-limiting step of the oxidative pentose-phosphate pathway, which represents a route for the dissimilation of carbohydrates besides glycolysis. The main function of this enzyme is to provide reducing power (NADPH) and pentose phosphates for fatty acid and nucleic acid synthesis which are involved in membrane synthesis and cell division. The polypeptide is Glucose-6-phosphate 1-dehydrogenase, chloroplastic (Nicotiana tabacum (Common tobacco)).